A 327-amino-acid chain; its full sequence is S-adenosylmethionine/S-adenosylhomocysteine transporter (327 aa).

10 helical membrane-spanning segments follow: residues 22-42 (CDMAIFLIFLNAFIWSSSFAL), 53-73 (LFVTGSRMVLAGVVLFGLLLC), 85-105 (IMPIVLLSVIGFYLTNVLEFI), 114-134 (TACFIYGFSPFTAAFCSYVQL), 143-163 (LGGLSLGLVSYLVYLLFGGSE), 165-185 (VAEWGWQLGLPELLLIAATCL), 202-222 (SLSMTAINAYAMVIAGVLSLI), 240-260 (LFLQAIGALVIFSNLICYNLF), 271-291 (FLSFCNLVMPLFASFFGWLLL), and 294-314 (SFPPGLLFAVGFMVLGCRLIY). The EamA 1 domain occupies 34 to 157 (FIWSSSFALS…LGLVSYLVYL (124 aa)). The 125-residue stretch at 189–313 (GWTLLRKLGR…GFMVLGCRLI (125 aa)) folds into the EamA 2 domain.

This sequence belongs to the drug/metabolite transporter (DMT) superfamily. 10 TMS drug/metabolite exporter (DME) (TC 2.A.7.3) family.

The protein resides in the cell membrane. Functionally, transports S-adenosylmethionine (SAM) and S-adenosylhomocysteine (SAH). Allows bacteria to acquire SAM from the eukaryotic host cell and to likely remove the toxic by-product SAH. In Chlamydia trachomatis serovar D (strain ATCC VR-885 / DSM 19411 / UW-3/Cx), this protein is S-adenosylmethionine/S-adenosylhomocysteine transporter.